The primary structure comprises 491 residues: Transcription factor unc-3 (491 aa).

Residues 66–69 form an interaction with DNA region; the sequence is RKSN. The C5-type zinc-finger motif lies at 154–173; that stretch reads CRVLLTHEVMCSRCCEKKSC. Interaction with DNA regions lie at residues 200–207 and 239–242; these read NCLKNAGN and NNSK. The tract at residues 240–261 is disordered; sequence NSKHGRRTKRTDASDDSEYSES. Positions 269–355 constitute an IPT/TIG domain; the sequence is PVIKALFPSE…SRGTPLRFSY (87 aa).

This sequence belongs to the COE family. May homodimerise. Interacts with jmjd-3.1. May interact with GFI1 homolog pag-3.

Its subcellular location is the nucleus. In terms of biological role, transcription factor. Involved in motor neuron fate determination and maintenance, acting as an activator of gene expression in a subset of motor neurons. May act in concert with GFI1 homolog pag-3 in motor neuron fate determination. Required to maintain the expression of transcriptional repressors bnc-1 and cfi-1, which play roles in the cell fate of motor neurons. May play a role in the expression of proteins essential for axonal pathfinding and/or neuronal differentiation in both sensory and motor neurons. Cooperates with jmjd-3.1 and wdr-5.1 to ensure robust transdifferentiation of the Y rectal cell to the PDA motor neuron during larval development. This Caenorhabditis elegans protein is Transcription factor unc-3 (unc-3).